The following is an 890-amino-acid chain: DNA mismatch repair protein MutS (890 aa).

An ATP-binding site is contributed by 645–652 (GPNMAGKS).

It belongs to the DNA mismatch repair MutS family.

This protein is involved in the repair of mismatches in DNA. It is possible that it carries out the mismatch recognition step. This protein has a weak ATPase activity. This is DNA mismatch repair protein MutS from Rickettsia africae (strain ESF-5).